We begin with the raw amino-acid sequence, 225 residues long: Protein-L-isoaspartate O-methyltransferase (225 aa).

The active site involves S75.

This sequence belongs to the methyltransferase superfamily. L-isoaspartyl/D-aspartyl protein methyltransferase family.

The protein localises to the cytoplasm. It carries out the reaction [protein]-L-isoaspartate + S-adenosyl-L-methionine = [protein]-L-isoaspartate alpha-methyl ester + S-adenosyl-L-homocysteine. Its function is as follows. Catalyzes the methyl esterification of L-isoaspartyl residues in peptides and proteins that result from spontaneous decomposition of normal L-aspartyl and L-asparaginyl residues. It plays a role in the repair and/or degradation of damaged proteins. In Xylella fastidiosa (strain 9a5c), this protein is Protein-L-isoaspartate O-methyltransferase.